Reading from the N-terminus, the 335-residue chain is D-arabinose 1-dehydrogenase (335 aa).

Y58 serves as the catalytic Proton donor. Position 124 (H124) interacts with substrate. 221–287 provides a ligand contact to NAD(+); sequence SLLRSQETRQ…VSSMEELKLA (67 aa).

This sequence belongs to the aldo/keto reductase family. Aldo/keto reductase 2 subfamily.

The enzyme catalyses D-arabinose + NAD(+) = D-arabinono-1,4-lactone + NADH + H(+). The sequence is that of D-arabinose 1-dehydrogenase (ARA2) from Saccharomyces cerevisiae (strain ATCC 204508 / S288c) (Baker's yeast).